The chain runs to 635 residues: GTPase-GDP dissociation stimulator vimar (635 aa).

4 ARM repeats span residues 72-118, 346-391, 392-432, and 510-550; these read KSEV…NICY, TDSH…NLVI, PKPN…MTVD, and RSSL…ILSV.

Interacts with Miro.

The protein localises to the endoplasmic reticulum. It localises to the mitochondrion. It is found in the cytoplasm. Its subcellular location is the cytosol. Functionally, probably acts as a GEF (guanine nucleotide exchange factor) for the Rho family of small GTP-binding proteins (G proteins) that stimulates the dissociation of GDP to enable subsequent binding of GTP. May also chaperone the processing and/or trafficking of small GTPases independently of GEF activity. By interacting with Miro, promotes mitochondrial fission in response to high calcium concentrations. This is GTPase-GDP dissociation stimulator vimar from Drosophila melanogaster (Fruit fly).